We begin with the raw amino-acid sequence, 449 residues long: Glucose-6-phosphate isomerase (449 aa).

Glutamate 291 (proton donor) is an active-site residue. Active-site residues include histidine 312 and lysine 426.

Belongs to the GPI family.

Its subcellular location is the cytoplasm. The catalysed reaction is alpha-D-glucose 6-phosphate = beta-D-fructose 6-phosphate. It participates in carbohydrate biosynthesis; gluconeogenesis. The protein operates within carbohydrate degradation; glycolysis; D-glyceraldehyde 3-phosphate and glycerone phosphate from D-glucose: step 2/4. In terms of biological role, catalyzes the reversible isomerization of glucose-6-phosphate to fructose-6-phosphate. In Streptococcus equi subsp. zooepidemicus (strain MGCS10565), this protein is Glucose-6-phosphate isomerase.